A 228-amino-acid chain; its full sequence is Small ribosomal subunit protein uS2 (228 aa).

It belongs to the universal ribosomal protein uS2 family.

The chain is Small ribosomal subunit protein uS2 from Blochmanniella pennsylvanica (strain BPEN).